The primary structure comprises 273 residues: Flagellin FljO (273 aa).

This sequence belongs to the bacterial flagellin family. In terms of assembly, in C.crescentus, the flagellar filament is composed of multiple flagellins of 29 kDa; 27 kDa and 25 kDa.

Its subcellular location is the secreted. The protein localises to the bacterial flagellum. Flagellin is the subunit protein which polymerizes to form the filaments of bacterial flagella. The sequence is that of Flagellin FljO (fljO) from Caulobacter vibrioides (strain ATCC 19089 / CIP 103742 / CB 15) (Caulobacter crescentus).